A 323-amino-acid chain; its full sequence is Probable cell division protein WhiA (323 aa).

Positions T275 to S309 form a DNA-binding region, H-T-H motif.

This sequence belongs to the WhiA family.

Involved in cell division and chromosome segregation. This Listeria innocua serovar 6a (strain ATCC BAA-680 / CLIP 11262) protein is Probable cell division protein WhiA.